Here is a 395-residue protein sequence, read N- to C-terminus: Inactive serine protease 54 (395 aa).

The N-terminal stretch at 1-30 (MVSAAGLSGDGKMRGVLLVLLGLLYSSTSC) is a signal peptide. Positions 37–269 (VFYGPDPKEG…YSKWITSKAE (233 aa)) constitute a Peptidase S1 domain. An N-linked (GlcNAc...) asparagine glycan is attached at Asn123. Intrachain disulfides connect Cys164–Cys227, Cys195–Cys205, and Cys217–Cys248. Positions 324–348 (RLGNSSRDSLDVREKDVKESGRSPE) are disordered. A glycan (N-linked (GlcNAc...) asparagine) is linked at Asn327. Over residues 331–345 (DSLDVREKDVKESGR) the composition is skewed to basic and acidic residues.

The protein belongs to the peptidase S1 family. Plasma kallikrein subfamily.

The protein resides in the secreted. This chain is Inactive serine protease 54 (PRSS54), found in Homo sapiens (Human).